The following is a 503-amino-acid chain: 4-trimethylaminobutyraldehyde dehydrogenase (503 aa).

Residues K189 and 241 to 245 each bind NAD(+); that span reads GSVPT. E263 (proton acceptor) is an active-site residue. C297 functions as the Nucleophile in the catalytic mechanism. Residue E400 coordinates NAD(+).

This sequence belongs to the aldehyde dehydrogenase family. As to quaternary structure, homotetramer.

The protein localises to the cytoplasm. It is found in the cytosol. The catalysed reaction is 4-(trimethylamino)butanal + NAD(+) + H2O = 4-(trimethylamino)butanoate + NADH + 2 H(+). The enzyme catalyses an aldehyde + NAD(+) + H2O = a carboxylate + NADH + 2 H(+). It participates in amine and polyamine biosynthesis; carnitine biosynthesis. Functionally, converts gamma-trimethylaminobutyraldehyde into gamma-butyrobetaine with high efficiency (in vitro). Can catalyze the irreversible oxidation of a broad range of aldehydes to the corresponding acids in an NAD-dependent reaction, but with low efficiency. This Gadus morhua subsp. callarias (Baltic cod) protein is 4-trimethylaminobutyraldehyde dehydrogenase (aldh9A1).